A 380-amino-acid polypeptide reads, in one-letter code: MVQWKHAALLALALAVVGCSSNSKKELPPAELTDFKEEVVLSKQWSRSVGDGQGDLYNLLEPAVDGSTIYAASAEGRVMAIQRETGDVLWKKDLERPVSGGVGVGYGLVLVGTLRGDVIALDEATGKKKWTKRVNSEVLSAPATNGDVVVVQTQDDKLIGLDAASGDQRWIYESTVPVLTLRGTGAPLIAGNMALAGLASGKVVAVDVQRGLPIWEQRVAIPQGRSELDRVVDIDGGLLLSGDTLYVVSYQGRAAALDVNSGRLLWQREASSYVGVAEGFGNIYVSQASGSVEGLDSRGASSLWNNDALARRQLSAPAVFSSNVVVGDLEGYVHLLSQVDGRFVGRERVDSDGVRVRPLVVGSWMYVFGNGGKLVAYTIR.

The first 18 residues, 1–18 (MVQWKHAALLALALAVVG), serve as a signal peptide directing secretion. Residue cysteine 19 is the site of N-palmitoyl cysteine attachment. Residue cysteine 19 is the site of S-diacylglycerol cysteine attachment.

Belongs to the BamB family. Part of the Bam complex.

The protein localises to the cell outer membrane. In terms of biological role, part of the outer membrane protein assembly complex, which is involved in assembly and insertion of beta-barrel proteins into the outer membrane. The sequence is that of Outer membrane protein assembly factor BamB from Pseudomonas aeruginosa (strain ATCC 15692 / DSM 22644 / CIP 104116 / JCM 14847 / LMG 12228 / 1C / PRS 101 / PAO1).